The sequence spans 242 residues: DNA repair protein RecO (242 aa).

Belongs to the RecO family.

Functionally, involved in DNA repair and RecF pathway recombination. In Nitrosospira multiformis (strain ATCC 25196 / NCIMB 11849 / C 71), this protein is DNA repair protein RecO.